A 227-amino-acid polypeptide reads, in one-letter code: Phage shock protein A homolog (227 aa).

Positions 33–125 (LRNMNSDLAK…AQMRKMHDKL (93 aa)) form a coiled coil. Residues 191 to 211 (SAPQDDMADLSAKYDTGGSSQ) are disordered.

The protein belongs to the PspA/Vipp/IM30 family.

This is Phage shock protein A homolog (ydjF) from Bacillus subtilis (strain 168).